A 101-amino-acid polypeptide reads, in one-letter code: CRISPR-associated endoribonuclease Cas2 (101 aa).

Residue aspartate 8 participates in Mg(2+) binding.

It belongs to the CRISPR-associated endoribonuclease Cas2 protein family. As to quaternary structure, homodimer, forms a heterotetramer with a Cas1 homodimer. The cofactor is Mg(2+).

Its function is as follows. CRISPR (clustered regularly interspaced short palindromic repeat), is an adaptive immune system that provides protection against mobile genetic elements (viruses, transposable elements and conjugative plasmids). CRISPR clusters contain sequences complementary to antecedent mobile elements and target invading nucleic acids. CRISPR clusters are transcribed and processed into CRISPR RNA (crRNA). Functions as a ssRNA-specific endoribonuclease. Involved in the integration of spacer DNA into the CRISPR cassette. The protein is CRISPR-associated endoribonuclease Cas2 of Lacticaseibacillus rhamnosus (strain ATCC 53103 / LMG 18243 / GG) (Lactobacillus rhamnosus).